Consider the following 1042-residue polypeptide: MFKKVENKANFPKIEEKILKFWNDNKIFEKSMKQREGCEEFTFYDGPPFATGLPHFGHFVPNTIKDIIPRYQTMRGKYVKRNFGWDTHGLPVEYEVEKKLGISGKYEIENYGIENFNKECKKIVLRYTEEWKNIILRLGRWVDFEKGYKTMDINFMESVWWVFKSLYNKGLIYESYYVLPYSPKLATPLSNFEVNLGEYKEVNDPSLTIKFKIKDKNEYLLAWTTTPWTLPSNLGIAVGQEIEYSKIFDKKKEEILILGSKKLDSYYDDENSYTIIEKFKGSKLEGIEYEPIFNYFLEQKDKGAFKVHMADYVTTDDGTGIVHIAPFGEEDYRILKKHTNVDIIDPLDAECKFTNRVKDFQGLFVKDADKKIIENLKLRNFLFKRENYLHRYPFCYRTNYPIIYRPISSWFVNVEKIKTKLLEVNEKINWMPAHLKKGRFGKWLENAKDWAISRNRFWGNPIPIWICSKTGKKICVGSKKELESLSGQKIEDLHKDKVDKITWPSKDGGTFIRTSEVLDCWFESGAMPYASNHYPFTNESNFKNIFPADFIAEGLDQTRGWFYTLTILGVSLFESTAFKNVIVNGLVLSSDGRKMSKSFKNYTDPMEVINTFGADALRLYLIMSPVVKADDLKYSDNGVRDVLKNIIIPIWNAYSFFTTYAIIDKFQPPKNLNLVKNNNLDKWIISELESLKKILNNEIDKYNLTKSIESLLEFIDKLNNWYIRRSRRRFWKSENDKDKNDAYETLYYAIKTLMILLAPFIPFITEEIYQNLKTDEDKQSIHLNDYPKANENLINKTIEEKINLARKITSMARSLRSLHNIKIRMPISMIYIVTKNQNEQNMLIEMQEIILDEINAKEMKIKSNEEDLITYKAKANFKELGKKLGKDMKTVSIEISKLKNEDIIKIINGISYEIKVGNTKYYLSLNDIILEREEKDNLKVINEESITIGIDSLITKELYLEGLTREFVRQIQNLRKEKNFDVSDRINLYIENNETLQEILNKFEKYIKTETLALNIIFNKSKLEKKINLDDNIFTIIGIEKC.

The 'HIGH' region motif lies at 48–58; the sequence is PFATGLPHFGH. Residues 594–598 carry the 'KMSKS' region motif; the sequence is KMSKS. Position 597 (lysine 597) interacts with ATP.

It belongs to the class-I aminoacyl-tRNA synthetase family. IleS type 2 subfamily. As to quaternary structure, monomer. It depends on Zn(2+) as a cofactor.

The protein localises to the cytoplasm. It carries out the reaction tRNA(Ile) + L-isoleucine + ATP = L-isoleucyl-tRNA(Ile) + AMP + diphosphate. Its function is as follows. Catalyzes the attachment of isoleucine to tRNA(Ile). As IleRS can inadvertently accommodate and process structurally similar amino acids such as valine, to avoid such errors it has two additional distinct tRNA(Ile)-dependent editing activities. One activity is designated as 'pretransfer' editing and involves the hydrolysis of activated Val-AMP. The other activity is designated 'posttransfer' editing and involves deacylation of mischarged Val-tRNA(Ile). This chain is Isoleucine--tRNA ligase, found in Borreliella afzelii (strain PKo) (Borrelia afzelii).